Here is a 395-residue protein sequence, read N- to C-terminus: L-methionine gamma-lyase (395 aa).

Pyridoxal 5'-phosphate is bound by residues 56 to 58 and 86 to 87; these read YTR and GM. A substrate-binding site is contributed by Y111. 206-208 contributes to the pyridoxal 5'-phosphate binding site; the sequence is SVT. Position 209 is an N6-(pyridoxal phosphate)lysine (K209). R373 contacts substrate.

It belongs to the trans-sulfuration enzymes family. L-methionine gamma-lyase subfamily. Homotetramer. Pyridoxal 5'-phosphate is required as a cofactor.

The catalysed reaction is L-methionine + H2O = methanethiol + 2-oxobutanoate + NH4(+). The enzyme catalyses L-homocysteine + H2O = 2-oxobutanoate + hydrogen sulfide + NH4(+) + H(+). Catalyzes the alpha,gamma-elimination of L-methionine to produce methanethiol, 2-oxobutanoate and ammonia; methanethiol (methyl mercaptan) is considered to be one of the main causes of the oral malodor associated with periodontitis. Also displays homocysteine desulfhydrase activity, degrading homocysteine to produce hydrogen sulfide, 2-oxobutanoate and ammonia. L-cysteine and S-methyl-L-cysteine are poor substrates for the enzyme. Functionally, plays an important role in the resistance of F.nucleatum to the antibacterial agent 3-chloro-DL-alanine (3CA), thanks to its 3CA chloride-lyase (deaminating) activity. In Fusobacterium nucleatum subsp. polymorphum (Fusobacterium polymorphum), this protein is L-methionine gamma-lyase.